We begin with the raw amino-acid sequence, 145 residues long: MENLTNISIELNQQFNTKEEAIRFCGEKLVEAGCVEPAYIEAMIERDQLLSVYMGNFIAIPHGTEEAKKLVKKSGICVVQVPEGVNFGTEEDEKIATVLFGIAGVGEEHLQLVQQIALYCSDMDNVVQLADALSKEEITENLAIA.

A PTS EIIA type-2 domain is found at 2-145 (ENLTNISIEL…EEITENLAIA (144 aa)). Residue H62 is the Tele-phosphohistidine intermediate of the active site. Residue H62 is modified to Phosphohistidine; by HPr.

The protein resides in the cytoplasm. Functionally, the phosphoenolpyruvate-dependent sugar phosphotransferase system (sugar PTS), a major carbohydrate active transport system, catalyzes the phosphorylation of incoming sugar substrates concomitantly with their translocation across the cell membrane. The enzyme II CmtAB PTS system is involved in D-mannitol transport. The polypeptide is Mannitol-specific phosphotransferase enzyme IIA component (Enterococcus faecalis (strain ATCC 700802 / V583)).